Reading from the N-terminus, the 35-residue chain is Photosystem II reaction center protein T (35 aa).

Residues Ala3 to Phe23 traverse the membrane as a helical segment.

It belongs to the PsbT family. PSII is composed of 1 copy each of membrane proteins PsbA, PsbB, PsbC, PsbD, PsbE, PsbF, PsbH, PsbI, PsbJ, PsbK, PsbL, PsbM, PsbT, PsbY, PsbZ, Psb30/Ycf12, at least 3 peripheral proteins of the oxygen-evolving complex and a large number of cofactors. It forms dimeric complexes.

The protein resides in the plastid. Its subcellular location is the chloroplast thylakoid membrane. In terms of biological role, found at the monomer-monomer interface of the photosystem II (PS II) dimer, plays a role in assembly and dimerization of PSII. PSII is a light-driven water plastoquinone oxidoreductase, using light energy to abstract electrons from H(2)O, generating a proton gradient subsequently used for ATP formation. The protein is Photosystem II reaction center protein T of Metasequoia glyptostroboides (Dawn redwood).